Reading from the N-terminus, the 576-residue chain is Keratin, type II cytoskeletal 5 (576 aa).

The interval 1 to 163 (MSRQSSVSFR…DPTIQRVRTE (163 aa)) is head. Residues serine 5, serine 8, serine 16, and serine 21 each carry the phosphoserine modification. Residue threonine 24 is modified to Phosphothreonine; by CDK1. A phosphoserine mark is found at serine 26, serine 36, serine 46, serine 60, serine 67, serine 71, serine 74, and serine 78. Residue threonine 147 is modified to Phosphothreonine; by CDK1. Residue threonine 162 is modified to Phosphothreonine; by AURKB. Positions 164 to 199 (EREQIKTLNNKFASFIDKVRFLEQQNKVLDTKWTLL) are coil 1A. The IF rod domain occupies 164 to 477 (EREQIKTLNN…KLLEGEECRL (314 aa)). Positions 200-218 (QEQGTKTIKQNLDPLFEQY) are linker 1. The segment at 219 to 311 (INNLRRQLDG…FFDAELSQMQ (93 aa)) is coil 1B. The tract at residues 312-334 (THVSDTSVVLSMDNNRSLDLDSI) is linker 12. The segment at 335–473 (IAEVKAQYED…ATYRKLLEGE (139 aa)) is coil 2. The interval 474 to 576 (ECRLSGEGVG…TSSSRRSFKS (103 aa)) is tail. Arginine 527 carries the omega-N-methylarginine modification. The segment covering 540–557 (GFSASSGQGGGFSSGGGS) has biased composition (gly residues). Residues 540–576 (GFSASSGQGGGFSSGGGSSSSVKFVSTTSSSRRSFKS) form a disordered region. A compositionally biased stretch (low complexity) spans 558–576 (SSSVKFVSTTSSSRRSFKS).

It belongs to the intermediate filament family. As to quaternary structure, heterodimer of a type I and a type II keratin. Heterodimer with type I keratin KRT25 leading to the formation of keratin intermediate filament (KIF) network. Forms a heterodimer (via 2B domains) with KRT14 (via 2B domains). Interacts with TCHP. Interacts with EPPK1. Interacts with AMELX. Interacts with PKP1 (via N-terminus) and PKP2. Post-translationally, phosphorylated by CDK1, AURKB and Rho-kinase, phosphorylation is regulated by the cell cycle. Thr-24 phosphorylation, mediated by CDK1, peaks during prometaphase or metaphase cells with phosphorylated filamentous structures evident throughout the cytoplasm during early mitosis. CDK1 phosphorylates Thr-24 in mitotic cells at the site of injury. O-glycosylated. As to expression, expressed in the epidermis (at protein level) and testis (within pachytene spermatocytes).

It localises to the cytoplasm. Its function is as follows. Required for the formation of keratin intermediate filaments in the basal epidermis and maintenance of the skin barrier in response to mechanical stress. Regulates the recruitment of Langerhans cells to the epidermis, potentially by modulation of the abundance of macrophage chemotactic cytokines, macrophage inflammatory cytokines and CTNND1 localization in keratinocytes. This is Keratin, type II cytoskeletal 5 from Rattus norvegicus (Rat).